The following is a 241-amino-acid chain: Attacin-C (241 aa).

The first 21 residues, 1–21 (MSKIVLLIVVIVGVLGSLAVA), serve as a signal peptide directing secretion. The propeptide occupies 22–23 (LP). At Q24 the chain carries Pyrrolidone carboxylic acid. T39 carries O-linked (GalNAc...) threonine glycosylation. At S127 the chain carries Phosphoserine.

This sequence belongs to the attacin/sarcotoxin-2 family. Hemolymph (at protein level).

Its subcellular location is the secreted. Has antimicrobial activity in synergy with other peptides. Strongest activity observed against E.cloacae. The chain is Attacin-C from Drosophila melanogaster (Fruit fly).